A 254-amino-acid polypeptide reads, in one-letter code: MAGHSKWANTKHRKAAQDAKKGKIFTKIIRELVTSARLGGGDPASNPRLRTAIDKALSHNMTRDTLNRAIARGIGGGEDSHMENILYEGYGPAGTAVMVSCLSDNRNRTVSEVRHAFTKTGGNLGTGGSVSYLFTKKGVFSYAPGLNEDQVMELALESGADDIMVYDDGAIDIFSSPEFFETIKKTLETAGLMASTAEISMIPSTKIDLNLENAQRLLRLIDMLEDSDDVQEVYHNGDFSDEISAALFFKNTKP.

Residues 1-20 (MAGHSKWANTKHRKAAQDAK) form a disordered region.

Belongs to the TACO1 family.

Its subcellular location is the cytoplasm. In Hamiltonella defensa subsp. Acyrthosiphon pisum (strain 5AT), this protein is Probable transcriptional regulatory protein HDEF_0869.